We begin with the raw amino-acid sequence, 408 residues long: UDP-N-acetylglucosamine--dolichyl-phosphate N-acetylglucosaminephosphotransferase (408 aa).

Over 1–10 the chain is Lumenal; it reads MWAFPELPMP. The helical transmembrane segment at 11-38 threads the bilayer; it reads LLVNLIGSLMGFVATVTLIPAFRGHFIA. Topologically, residues 39-58 are cytoplasmic; it reads ARLCGQDLNKSSREQIPESQ. UDP-N-acetyl-alpha-D-glucosamine-binding positions include 44–46 and glutamate 56; that span reads QDL. Residues 59–78 traverse the membrane as a helical segment; the sequence is GVISGAVFLIILFCFIPFPF. Over 79–91 the chain is Lumenal; it reads LNCFVEQQCKAFP. A helical membrane pass occupies residues 92 to 118; it reads HHEFVALIGALLAICCMIFLGFADDVL. At 119-121 the chain is on the cytoplasmic side; sequence NLR. A helical membrane pass occupies residues 122–143; it reads WRHKLLLPTAASLPLLMVYFTN. A dolichyl phosphate-binding site is contributed by lysine 125. Residues 144–166 are Lumenal-facing; the sequence is FGNTTIVVPKPLRPILGLHLDLG. Asparagine 146 carries N-linked (GlcNAc...) asparagine glycosylation. A helical transmembrane segment spans residues 167 to 186; the sequence is ILYYVYMGLLAVFCTNAINI. 178–186 lines the dolichyl phosphate pocket; it reads VFCTNAINI. A Mg(2+)-binding site is contributed by asparagine 185. Topologically, residues 187–192 are cytoplasmic; that stretch reads LAGING. Asparagine 191 provides a ligand contact to UDP-N-acetyl-alpha-D-glucosamine. The chain crosses the membrane as a helical span at residues 193-213; it reads LEAGQSLVISASIIVFNLVEL. The Lumenal portion of the chain corresponds to 214–218; the sequence is DGDYR. The chain crosses the membrane as a helical span at residues 219 to 242; that stretch reads DDHIFSLYFMIPFFFTTLGLLYHN. Residues 243–250 lie on the Cytoplasmic side of the membrane; that stretch reads WYPSRVFV. A helical transmembrane segment spans residues 251 to 269; that stretch reads GDTFCYFAGMTFAVVGILG. Residue aspartate 252 participates in Mg(2+) binding. The Lumenal segment spans residues 270 to 271; it reads HF. Residues 272–293 traverse the membrane as a helical segment; sequence SKTMLLFFMPQVFNFLYSLPQL. At 294-375 the chain is on the cytoplasmic side; sequence LHIIPCPRHR…LLLKVFGPMH (82 aa). 301-303 contacts UDP-N-acetyl-alpha-D-glucosamine; that stretch reads RHR. A helical transmembrane segment spans residues 376–400; sequence ERNLTLLLLLLQVVGSAVTFSIRYQ. At 401–408 the chain is on the lumenal side; it reads LVRLFYDV.

This sequence belongs to the glycosyltransferase 4 family. In terms of assembly, homodimer. Mg(2+) is required as a cofactor.

It is found in the endoplasmic reticulum membrane. It catalyses the reaction a di-trans,poly-cis-dolichyl phosphate + UDP-N-acetyl-alpha-D-glucosamine = an N-acetyl-alpha-D-glucosaminyl-diphospho-di-trans,poly-cis-dolichol + UMP. It participates in protein modification; protein glycosylation. Inhibited by natural nucleoside antibiotic tunicamycin, which acts as a structural analog and competitor of UDP-GlcNAc. Activated by Man-P-Dol. Activated by manganese. Inhibited by diumycin. In terms of biological role, UDP-N-acetylglucosamine--dolichyl-phosphate N-acetylglucosaminephosphotransferase that operates in the biosynthetic pathway of dolichol-linked oligosaccharides, the glycan precursors employed in protein asparagine (N)-glycosylation. The assembly of dolichol-linked oligosaccharides begins on the cytosolic side of the endoplasmic reticulum membrane and finishes in its lumen. The sequential addition of sugars to dolichol pyrophosphate produces dolichol-linked oligosaccharides containing fourteen sugars, including two GlcNAcs, nine mannoses and three glucoses. Once assembled, the oligosaccharide is transferred from the lipid to nascent proteins by oligosaccharyltransferases. Catalyzes the initial step of dolichol-linked oligosaccharide biosynthesis, transfering GlcNAc-1-P from cytosolic UDP-GlcNAc onto the carrier lipid dolichyl phosphate (P-dolichol), yielding GlcNAc-P-P-dolichol embedded in the cytoplasmic leaflet of the endoplasmic reticulum membrane. This chain is UDP-N-acetylglucosamine--dolichyl-phosphate N-acetylglucosaminephosphotransferase, found in Bos taurus (Bovine).